Here is a 432-residue protein sequence, read N- to C-terminus: Peptidase B (432 aa).

Residues K196 and D201 each coordinate Mn(2+). K208 is an active-site residue. Residues D219, D278, and E280 each coordinate Mn(2+). Residue R282 is part of the active site.

Belongs to the peptidase M17 family. Homohexamer. Mn(2+) is required as a cofactor.

Its subcellular location is the cytoplasm. The catalysed reaction is Release of an N-terminal amino acid, Xaa, from a peptide or arylamide. Xaa is preferably Glu or Asp but may be other amino acids, including Leu, Met, His, Cys and Gln.. Probably plays an important role in intracellular peptide degradation. The protein is Peptidase B of Vibrio vulnificus (strain CMCP6).